The following is a 451-amino-acid chain: Tubulin beta-1 chain (451 aa).

GTP-binding residues include glutamine 11, glutamate 73, serine 142, glycine 146, threonine 147, glycine 148, asparagine 208, and asparagine 230. Glutamate 73 contacts Mg(2+). The interval 430–451 (QEATADDEAEFEEEGEVEGEYA) is disordered. A compositionally biased stretch (acidic residues) spans 433 to 451 (TADDEAEFEEEGEVEGEYA).

This sequence belongs to the tubulin family. As to quaternary structure, dimer of alpha and beta chains. A typical microtubule is a hollow water-filled tube with an outer diameter of 25 nm and an inner diameter of 15 nM. Alpha-beta heterodimers associate head-to-tail to form protofilaments running lengthwise along the microtubule wall with the beta-tubulin subunit facing the microtubule plus end conferring a structural polarity. Microtubules usually have 13 protofilaments but different protofilament numbers can be found in some organisms and specialized cells. Mg(2+) serves as cofactor.

The protein localises to the cytoplasm. It localises to the cytoskeleton. Functionally, tubulin is the major constituent of microtubules, a cylinder consisting of laterally associated linear protofilaments composed of alpha- and beta-tubulin heterodimers. Microtubules grow by the addition of GTP-tubulin dimers to the microtubule end, where a stabilizing cap forms. Below the cap, tubulin dimers are in GDP-bound state, owing to GTPase activity of alpha-tubulin. In Homarus americanus (American lobster), this protein is Tubulin beta-1 chain.